Consider the following 437-residue polypeptide: Amino-acid acetyltransferase (437 aa).

The N-acetyltransferase domain maps to 289 to 429 (ENIRLATSFD…EHYNYQRMSK (141 aa)).

Belongs to the acetyltransferase family. ArgA subfamily.

It is found in the cytoplasm. The catalysed reaction is L-glutamate + acetyl-CoA = N-acetyl-L-glutamate + CoA + H(+). The protein operates within amino-acid biosynthesis; L-arginine biosynthesis; N(2)-acetyl-L-ornithine from L-glutamate: step 1/4. The protein is Amino-acid acetyltransferase of Actinobacillus pleuropneumoniae serotype 5b (strain L20).